The sequence spans 636 residues: MPIITLPDGTKKIFEQVVSVEQVAKSMGLVKAALAGEVDGELVSTSFLIKTDANLTIITANDDQGLEIIRHSTAHLLAQATQMLYPDAQVTIGPVIDNGFYYDFAYKNGFLEGDLIKIEKNMHKLVKQNLKIEKFEMSRDETLQFFKDKGEYYKVKIIESISTDQILSLYKQGDFIDLCRGPHVPSTAKLKNFKLMKLAGAYWRGDSSNEMLQRVYGTAWGNEQDLKVYLHKLEEVARRDHRKIGKTQDLFHIQEETPGMVFWHAKGWILYQLVEQYMRGIFRDNGYQEVHTPQLIDKSLWEKSGHWDKFGDVMFTTTSGDRDYAVKPMNCPAHIQIYNQGLKSYRNLPLRLAEFGSCHRNEPSGTLHGIMRVRNFVQDDGHIFCTPEQIQDEVSTFIDLTFNVYKYFGFEKINIKLSTRPKKRVGSDEVWDKSEIALVEALNAKNIVWELQEGEGAFYGPKIEFILKDCLDRQWQCGTLQVDFSMPKRLGAQFIDENSVKKTPVILHRAIMGSLERFLGILIEHYEGAYPCWLSPIQAVIINISEKHAKFIVDIVKKLKKQGLRVISDLRNEKVSFKIREHSLQRYPYILVVGDREMEKGQVSVRQRGGKDLGAMSVGTFIKKVNQETLLKNQIK.

Residues 1 to 59 (MPIITLPDGTKKIFEQVVSVEQVAKSMGLVKAALAGEVDGELVSTSFLIKTDANLTIIT) form the TGS domain. The interval 240–531 (DHRKIGKTQD…LIEHYEGAYP (292 aa)) is catalytic. Residues cysteine 331, histidine 382, and histidine 508 each coordinate Zn(2+).

This sequence belongs to the class-II aminoacyl-tRNA synthetase family. In terms of assembly, homodimer. Requires Zn(2+) as cofactor.

It localises to the cytoplasm. The catalysed reaction is tRNA(Thr) + L-threonine + ATP = L-threonyl-tRNA(Thr) + AMP + diphosphate + H(+). Functionally, catalyzes the attachment of threonine to tRNA(Thr) in a two-step reaction: L-threonine is first activated by ATP to form Thr-AMP and then transferred to the acceptor end of tRNA(Thr). Also edits incorrectly charged L-seryl-tRNA(Thr). This is Threonine--tRNA ligase from Vesicomyosocius okutanii subsp. Calyptogena okutanii (strain HA).